The chain runs to 312 residues: Olfactory receptor 6C1 (312 aa).

Topologically, residues 1–23 are extracellular; that stretch reads MRNHTEITEFILLGLTDDPNFQV. N3 is a glycosylation site (N-linked (GlcNAc...) asparagine). The helical transmembrane segment at 24-44 threads the bilayer; it reads VIFVFLLITYMLSITGNLTLI. Over 45 to 52 the chain is Cytoplasmic; it reads TITLLDSH. Residues 53-73 traverse the membrane as a helical segment; the sequence is LQTPMYFFLRNFSILEISFTT. Over 74–97 the chain is Extracellular; that stretch reads VSIPKFLGNIISGDKTISFNNCIV. A disulfide bridge links C95 with C187. The helical transmembrane segment at 98 to 118 threads the bilayer; it reads QLFFFILLGVTEFYLLAAMSY. The Cytoplasmic portion of the chain corresponds to 119–137; the sequence is DRYVAICKPLHCLSIMNRR. A helical membrane pass occupies residues 138–158; it reads VCTLLVFTSWLVSFLIIFPAL. Residues 159–195 are Extracellular-facing; sequence MLLLKLHYCRSNIIDHFTCDYFPLLQLACSDTKFLEV. The chain crosses the membrane as a helical span at residues 196 to 215; the sequence is MGFSCAAFTLMFTLALIFLS. Topologically, residues 216-235 are cytoplasmic; it reads YIYIIRTILRIPSTSQRTKA. Residues 236 to 256 form a helical membrane-spanning segment; the sequence is FSTCSSHMVVVSISYGSCIFM. The Extracellular portion of the chain corresponds to 257–269; that stretch reads YIKPSAKDRVSLS. Residues 270–290 form a helical membrane-spanning segment; sequence KGVAILNTSVAPMMNPFIYSL. Residues 291 to 312 are Cytoplasmic-facing; that stretch reads RNQQVKQAFINMARKTVFFTST.

It belongs to the G-protein coupled receptor 1 family.

The protein localises to the cell membrane. Odorant receptor. The sequence is that of Olfactory receptor 6C1 (OR6C1) from Homo sapiens (Human).